Consider the following 263-residue polypeptide: Inactive adenylate kinase (263 aa).

It belongs to the adenylate kinase family.

Its subcellular location is the cytoplasm. Functionally, lacks adenylate kinase activity. This chain is Inactive adenylate kinase, found in Plasmodium falciparum (isolate 3D7).